The following is a 273-amino-acid chain: Suppressor protein STM1 (273 aa).

Residues 1 to 153 (MSNPFDLLGN…PKTAQLSLQD (153 aa)) form a disordered region. S2 is modified (N-acetylserine). Phosphoserine; by MTOR occurs at positions 32, 41, and 45. Residue K46 forms a Glycyl lysine isopeptide (Lys-Gly) (interchain with G-Cter in ubiquitin) linkage. Residues S55 and S73 each carry the phosphoserine; by MTOR modification. At S55 the chain carries Phosphoserine. Basic and acidic residues-rich tracts occupy residues 60–77 (AIRDKTAGRRNNRSKDVT), 89–104 (RATDRHSRTGKTDTKK), and 111–124 (GDDKKELSAEKEAQ). S118 is modified (phosphoserine). Residues K121 and K171 each participate in a glycyl lysine isopeptide (Lys-Gly) (interchain with G-Cter in ubiquitin) cross-link. The residue at position 181 (T181) is a Phosphothreonine; by MTOR. Residue K184 forms a Glycyl lysine isopeptide (Lys-Gly) (interchain with G-Cter in ubiquitin) linkage. The residue at position 218 (T218) is a Phosphothreonine; by MTOR. The segment at 219–273 (RKNFGDRNNNSRNNFNNRRGGRGARKGNNTANATNSANTVQKNRNIDVSNLPSLA) is disordered. Low complexity-rich tracts occupy residues 224 to 236 (DRNNNSRNNFNNR) and 244 to 257 (KGNNTANATNSANT). S229 is subject to Phosphoserine. The segment covering 258-273 (VQKNRNIDVSNLPSLA) has biased composition (polar residues).

The protein belongs to the SERBP1-HABP4 family. In terms of assembly, associates with mature 80S ribosomes. Binds to the head domain of the 40S ribosomal subunit and prevents mRNA binding by inserting its alpha-helix domain towards the mRNA entry tunnel at the decoding site, where it blocks the binding of tRNA and mRNA at the A- and P-sites. Interacts with EFT1; interaction sequesters EFT1 at the A-site of the ribosome, thereby blocking the interaction sites of the mRNA-tRNA complex, promoting ribosome stabilization and hibernation. Interacts with CDC13. Associates with the telomere-proximal Y' element. Phosphorylation by TORC1 upon nutrient replenishment inhibits STM1 and causes its release from dormant ribosomes.

Its subcellular location is the cytoplasm. The protein resides in the nucleus. It is found in the perinuclear region. Its function is as follows. Ribosome preservation factor that protect a small pool of nontranslating, vacant ribosomes in cells under nutrient starvation conditions. Under nutrient-limiting conditions, cells reduce ribosome biogenesis and degrade ribosomes via autophagy (ribophagy) or proteasomal degradation. To avoid excessive degradation during starvation, STM1 binds to and protects 80S ribosomes from proteasomal degradation. Under nutrient-sufficient conditions, TORC1 phosphorylates and inhibits STM1 to prevent formation of dormant 80S ribosomes. Acts as an inhibitor of mRNA translation by promoting ribosome hibernation: clamps the two ribosomal subunits, thereby preventing their dissociation, and inhibits translation by excluding mRNA-binding. Acts via its association with eEF2 (EFT1), promoting ribosome stabilization and storage in an inactive state. May also repress translation by preventing association of eEF3 (YEF3 and HEF3) with ribosomes. Binds specifically G4 quadruplex (these are four-stranded right-handed helices, stabilized by guanine base quartets) and purine motif triplex (characterized by a third, antiparallel purine-rich DNA strand located within the major groove of a homopurine stretch of duplex DNA) nucleic acid structures. These structures may be present at telomeres or in rRNAs. Acts with CDC13 to control telomere length homeostasis. Involved in the control of the apoptosis-like cell death. This Saccharomyces cerevisiae (strain ATCC 204508 / S288c) (Baker's yeast) protein is Suppressor protein STM1.